A 524-amino-acid polypeptide reads, in one-letter code: GMP synthase [glutamine-hydrolyzing] (524 aa).

A Glutamine amidotransferase type-1 domain is found at 7 to 196 (PVLVVDFGAQ…LHELAGIPAS (190 aa)). The active-site Nucleophile is the Cys-84. Catalysis depends on residues His-170 and Glu-172. The region spanning 197–398 (WTPSNIADVL…LGLPEEIVAR (202 aa)) is the GMPS ATP-PPase domain. 224 to 230 (SGGVDSA) is an ATP binding site.

As to quaternary structure, homodimer.

It catalyses the reaction XMP + L-glutamine + ATP + H2O = GMP + L-glutamate + AMP + diphosphate + 2 H(+). The protein operates within purine metabolism; GMP biosynthesis; GMP from XMP (L-Gln route): step 1/1. Catalyzes the synthesis of GMP from XMP. The sequence is that of GMP synthase [glutamine-hydrolyzing] from Nocardia farcinica (strain IFM 10152).